The chain runs to 232 residues: Cytidylate kinase (232 aa).

19–27 contributes to the ATP binding site; that stretch reads GPAGVGKTT.

Belongs to the cytidylate kinase family. Type 1 subfamily.

It is found in the cytoplasm. The catalysed reaction is CMP + ATP = CDP + ADP. It carries out the reaction dCMP + ATP = dCDP + ADP. The sequence is that of Cytidylate kinase from Nitratidesulfovibrio vulgaris (strain ATCC 29579 / DSM 644 / CCUG 34227 / NCIMB 8303 / VKM B-1760 / Hildenborough) (Desulfovibrio vulgaris).